We begin with the raw amino-acid sequence, 116 residues long: Ribosome-binding factor A (116 aa).

This sequence belongs to the RbfA family. Monomer. Binds 30S ribosomal subunits, but not 50S ribosomal subunits or 70S ribosomes.

The protein resides in the cytoplasm. One of several proteins that assist in the late maturation steps of the functional core of the 30S ribosomal subunit. Associates with free 30S ribosomal subunits (but not with 30S subunits that are part of 70S ribosomes or polysomes). Required for efficient processing of 16S rRNA. May interact with the 5'-terminal helix region of 16S rRNA. This is Ribosome-binding factor A from Enterococcus faecalis (strain ATCC 700802 / V583).